Reading from the N-terminus, the 459-residue chain is Ribulose bisphosphate carboxylase large chain (459 aa).

An N6,N6,N6-trimethyllysine modification is found at K4. Substrate-binding residues include N113 and T163. The Proton acceptor role is filled by K165. Position 167 (K167) interacts with substrate. Residues K191, D193, and E194 each coordinate Mg(2+). K191 is subject to N6-carboxylysine. The Proton acceptor role is filled by H284. Substrate contacts are provided by R285, H317, and S369.

Belongs to the RuBisCO large chain family. Type I subfamily. In terms of assembly, heterohexadecamer of 8 large chains and 8 small chains; disulfide-linked. The disulfide link is formed within the large subunit homodimers. Requires Mg(2+) as cofactor. Post-translationally, the disulfide bond which can form in the large chain dimeric partners within the hexadecamer appears to be associated with oxidative stress and protein turnover.

It localises to the plastid. It is found in the chloroplast. The enzyme catalyses 2 (2R)-3-phosphoglycerate + 2 H(+) = D-ribulose 1,5-bisphosphate + CO2 + H2O. It catalyses the reaction D-ribulose 1,5-bisphosphate + O2 = 2-phosphoglycolate + (2R)-3-phosphoglycerate + 2 H(+). Its function is as follows. RuBisCO catalyzes two reactions: the carboxylation of D-ribulose 1,5-bisphosphate, the primary event in carbon dioxide fixation, as well as the oxidative fragmentation of the pentose substrate in the photorespiration process. Both reactions occur simultaneously and in competition at the same active site. The protein is Ribulose bisphosphate carboxylase large chain of Apium graveolens (Celery).